Reading from the N-terminus, the 150-residue chain is Phosphoribosyl-AMP cyclohydrolase (150 aa).

Residue D93 coordinates Mg(2+). Residue C94 participates in Zn(2+) binding. Mg(2+) contacts are provided by D95 and D97. Residues C112 and C119 each contribute to the Zn(2+) site.

This sequence belongs to the PRA-CH family. Homodimer. Mg(2+) is required as a cofactor. The cofactor is Zn(2+).

It is found in the cytoplasm. The enzyme catalyses 1-(5-phospho-beta-D-ribosyl)-5'-AMP + H2O = 1-(5-phospho-beta-D-ribosyl)-5-[(5-phospho-beta-D-ribosylamino)methylideneamino]imidazole-4-carboxamide. Its pathway is amino-acid biosynthesis; L-histidine biosynthesis; L-histidine from 5-phospho-alpha-D-ribose 1-diphosphate: step 3/9. Its function is as follows. Catalyzes the hydrolysis of the adenine ring of phosphoribosyl-AMP. This chain is Phosphoribosyl-AMP cyclohydrolase, found in Rhizobium leguminosarum bv. trifolii (strain WSM2304).